A 116-amino-acid polypeptide reads, in one-letter code: Prefoldin subunit beta (116 aa).

It belongs to the prefoldin subunit beta family. As to quaternary structure, heterohexamer of two alpha and four beta subunits.

The protein localises to the cytoplasm. Molecular chaperone capable of stabilizing a range of proteins. Seems to fulfill an ATP-independent, HSP70-like function in archaeal de novo protein folding. The protein is Prefoldin subunit beta (pfdB) of Archaeoglobus fulgidus (strain ATCC 49558 / DSM 4304 / JCM 9628 / NBRC 100126 / VC-16).